We begin with the raw amino-acid sequence, 504 residues long: Maturase K (504 aa).

Belongs to the intron maturase 2 family. MatK subfamily.

Its subcellular location is the plastid. The protein localises to the chloroplast. Its function is as follows. Usually encoded in the trnK tRNA gene intron. Probably assists in splicing its own and other chloroplast group II introns. The protein is Maturase K of Quercus cerris (Turkey oak).